We begin with the raw amino-acid sequence, 625 residues long: Chaperone protein DnaK (625 aa).

Phosphothreonine; by autocatalysis is present on threonine 197. Positions 598 to 625 (AYAKEQGGTQQGTDTKKKDDDVIDAEVE) are disordered.

The protein belongs to the heat shock protein 70 family.

Its function is as follows. Acts as a chaperone. The protein is Chaperone protein DnaK of Helicobacter hepaticus (strain ATCC 51449 / 3B1).